A 50-amino-acid polypeptide reads, in one-letter code: Nosiheptide precursor (50 aa).

Residues 38–39 (SC) constitute a cross-link (thiazole-4-carboxylic acid (Ser-Cys)). Residues 38 to 46 (SCTTCECCC) constitute a cross-link (3-hydroxypyridine-2,5-dicarboxylic acid (Ser-Cys) (with S-47)). Residues 38 to 47 (SCTTCECCCS) constitute a cross-link (3-hydroxypyridine-2,5-dicarboxylic acid (Ser-Ser) (with C-46)). Positions 41–42 (TC) form a cross-link, thiazole-4-carboxylic acid (Thr-Cys). Glutamate 43 carries the post-translational modification 4-hydroxyglutamate. The thiazole-4-carboxylic acid (Glu-Cys) cross-link spans 43 to 44 (EC). Residues 43–45 (ECC) constitute a cross-link (2-(cystein-S-ylcarbonyl)-3-methyl-4-(glutam-5-yloxy)methylindole (Glu-Cys)). Residues 45–46 (CC) constitute a cross-link (thiazole-4-carboxylic acid (Cys-Cys)). A cross-link (thiazole-4-carboxylic acid (Ser-Cys)) is located at residues 47-48 (SC). A 2,3-didehydroalanine (Ser) modification is found at serine 49. Serine 49 carries the post-translational modification Serine amide; atypical.

It belongs to the thiocillin family. The amidation of Ser-49 is produced by the oxidative cleavage of Ser-50 rather than of a glycine, as in eukaryotes.

In terms of biological role, inhibits bacterial protein biosynthesis by binding to ribosomes. Specifically, binds to the complex of 23S rRNA and ribosomal protein L11 (RPLK) in the 50S ribosomal subunit. While allowing a weak binding of elongation factor G (EF-G) to the ribosome and subsequent GTP-hydrolysis, probably impairs conformational changes in both the ribosome and EF-G which are necessary for translocation. In vitro, inhibits Gram-positive bacteria S.aureus strain 209P (MIC=0.0009 ug/ml), S.aureus strain 133 (MIC=0.0019 ug/ml), S.aureus strain B3 (MIC=0.003 ug/ml), S.aureus strain Hb (MIC=0.003 ug/ml), M.citreus strain ATCC 8411 (MIC=0.0038 ug/ml), M.lysodeikticus strain ATCC 4698 (MIC=0.003 ug/ml), S.lutea strain ATCC 9341 (MIC=0.0011 ug/ml), S.faecalis strain ATCC 9790 (MIC=0.0007 ug/ml), S.viridans (MIC=0.0065 ug/ml), S.pyogenes hemolyticus strain Dig7 (MIC=0.00028 ug/ml), D.pneumoniae strain Til (MIC=0.00015 ug/ml), N.catrrhalis (MIC=0.0017 ug/ml), L.casei strain ATCC 6633 (MIC=0.003 ug/ml), B.cereus strain ATCC 6630 (MIC=0.0071 ug/ml) and various isolates of L.monocytogenes. In vitro, inhibits Gram-negative bacterium P.multocida strain A125 (MIC=0.0024 ug/ml) but not M.smegmatis strain ATCC 6630, S.typhimurium, A.aerogenes strain ATCC 8308, P.vulgaris, K.pneumoniae strain ATCC 10031, S.marcescens strain A476, P.aeruginosa strain Bass or B.bronchiseptica strain CN387. Does not inhibit Gram-negative bacterium E.coli strain ATCC 9637 but does inhibit purified ribosomes from E.coli. In vivo, has no systemic effect in mice infected with staphylococci or streptococci when applied orally or subcutaneously. Has a local effect in mice infected subcutaneously or intraperitoneally with staphylococci when applied immediately afterwards. Is not toxic to mice. The sequence is that of Nosiheptide precursor from Streptomyces actuosus.